A 198-amino-acid polypeptide reads, in one-letter code: Nicotinamidase 3 (198 aa).

It belongs to the isochorismatase family.

The enzyme catalyses nicotinamide + H2O = nicotinate + NH4(+). It participates in cofactor biosynthesis; nicotinate biosynthesis; nicotinate from nicotinamide: step 1/1. In terms of biological role, catalyzes the deamidation of nicotinamide, an early step in the NAD(+) salvage pathway. Prevents the accumulation of intracellular nicotinamide, a known inhibitor of poly(ADP-ribose) polymerases (PARP enzymes). The protein is Nicotinamidase 3 of Arabidopsis thaliana (Mouse-ear cress).